Reading from the N-terminus, the 166-residue chain is Nucleotide-binding protein Acid_3194 (166 aa).

It belongs to the YajQ family.

In terms of biological role, nucleotide-binding protein. The polypeptide is Nucleotide-binding protein Acid_3194 (Solibacter usitatus (strain Ellin6076)).